The chain runs to 1235 residues: Serine/threonine-protein kinase TAO2 (1235 aa).

A Phosphoserine modification is found at Ser-9. The Protein kinase domain occupies 28 to 281 (FSDLREIGHG…SEVLLKHRFV (254 aa)). ATP contacts are provided by residues 34 to 42 (IGHGSFGAV) and Lys-57. The Proton acceptor role is filled by Asp-151. Phosphoserine is present on Ser-181. Positions 318-457 (QEAPNGPGAE…TSTTSSARRR (140 aa)) are disordered. Residues 350-374 (SSHSVPSMSISASSQSSSVNSLADA) are compositionally biased toward low complexity. The span at 375–393 (SDNEEEEEEEEEEEEEEEG) shows a compositional bias: acidic residues. The segment covering 394 to 409 (PEAREMAMMQEGEHTV) has biased composition (basic and acidic residues). A Phosphoserine modification is found at Ser-414. Coiled coils occupy residues 486 to 547 (SALR…RRHQ) and 574 to 601 (KELA…LQEN). The residue at position 656 (Ser-656) is a Phosphoserine. The stretch at 681–713 (LRQHEATRELELRQLQAVQRTRAELTRLQHQTE) forms a coiled coil. Disordered stretches follow at residues 732–777 (HAAQ…QPCS), 804–835 (KEGA…GSLV), and 891–939 (QGPA…RPCP). Over residues 766–777 (NTGTPIEQQPCS) the composition is skewed to polar residues. Phosphoserine is present on residues Ser-777, Ser-825, and Ser-827. A compositionally biased stretch (acidic residues) spans 899–908 (PEEEEEEEEG). Residues 924 to 934 (PDIPPEPPPTH) show a composition bias toward pro residues. The next 2 membrane-spanning stretches (helical) occupy residues 965–985 (LLPL…GGGL) and 987–1007 (AALL…LLLC). His-1011 and Gly-1031 each carry phosphoserine. 3 helical membrane passes run 1012–1032 (LPSS…VLGL), 1043–1063 (LGLG…LVAM), and 1166–1186 (QGLA…WGLL). The interval 1198–1235 (LPRSQRQLGPPASRQPLPGTLAGRRSRTRQSRALPPWR) is disordered.

It belongs to the protein kinase superfamily. STE Ser/Thr protein kinase family. STE20 subfamily. As to quaternary structure, interacts with MAP2K3 and MAP2K6. Self-associates. Interacts with tubulins through the C-terminal domain. Interacts with MAP3K7 and interferes with MAP3K7-binding to CHUK and thus prevents NF-kappa-B activation. Isoform 2 interacts with PCDH8; this complex may also include CDH2. It depends on Mg(2+) as a cofactor. Post-translationally, isoforms 1 and 2 are autophosphorylated. In terms of processing, C-terminal cleavage of isoform 1 and subsequent nuclear localization requires CASP9 activity. Autophosphorylated. Phosphorylated by ATM. Post-translationally, phosphorylated on Ser-1031 by MAPK14. This phosphorylation is required PCDH8 for endocytosis. As to expression, ubiquitously expressed, with a higher level of expression in testis and brain.

It is found in the cytoplasmic vesicle membrane. The protein resides in the cytoplasm. The protein localises to the cytoskeleton. It localises to the nucleus. Its subcellular location is the cell projection. It is found in the dendrite. It carries out the reaction L-seryl-[protein] + ATP = O-phospho-L-seryl-[protein] + ADP + H(+). The catalysed reaction is L-threonyl-[protein] + ATP = O-phospho-L-threonyl-[protein] + ADP + H(+). Selectively inhibited by the enantiopure organoruthenium inhibitor 9E1. Activated following arsenic trioxide (As(2)O(3)) treatment. Its function is as follows. Serine/threonine-protein kinase involved in different processes such as membrane blebbing and apoptotic bodies formation DNA damage response and MAPK14/p38 MAPK stress-activated MAPK cascade. Phosphorylates itself, MBP, activated MAPK8, MAP2K3, MAP2K6 and tubulins. Activates the MAPK14/p38 MAPK signaling pathway through the specific activation and phosphorylation of the upstream MAP2K3 and MAP2K6 kinases. In response to DNA damage, involved in the G2/M transition DNA damage checkpoint by activating the p38/MAPK14 stress-activated MAPK cascade, probably by mediating phosphorylation of upstream MAP2K3 and MAP2K6 kinases. Isoform 1, but not isoform 2, plays a role in apoptotic morphological changes, including cell contraction, membrane blebbing and apoptotic bodies formation. This function, which requires the activation of MAPK8/JNK and nuclear localization of C-terminally truncated isoform 1, may be linked to the mitochondrial CASP9-associated death pathway. Isoform 1 binds to microtubules and affects their organization and stability independently of its kinase activity. Prevents MAP3K7-mediated activation of CHUK, and thus NF-kappa-B activation, but not that of MAPK8/JNK. May play a role in the osmotic stress-MAPK8 pathway. Isoform 2, but not isoform 1, is required for PCDH8 endocytosis. Following homophilic interactions between PCDH8 extracellular domains, isoform 2 phosphorylates and activates MAPK14/p38 MAPK which in turn phosphorylates isoform 2. This process leads to PCDH8 endocytosis and CDH2 cointernalization. Both isoforms are involved in MAPK14 phosphorylation. This Homo sapiens (Human) protein is Serine/threonine-protein kinase TAO2 (TAOK2).